Reading from the N-terminus, the 246-residue chain is DNA polymerase sliding clamp (246 aa).

It belongs to the PCNA family. In terms of assembly, homotrimer. The subunits circularize to form a toroid; DNA passes through its center. Replication factor C (RFC) is required to load the toroid on the DNA.

Its function is as follows. Sliding clamp subunit that acts as a moving platform for DNA processing. Responsible for tethering the catalytic subunit of DNA polymerase and other proteins to DNA during high-speed replication. The polypeptide is DNA polymerase sliding clamp (Methanocella arvoryzae (strain DSM 22066 / NBRC 105507 / MRE50)).